Consider the following 407-residue polypeptide: Probable acyl-CoA dehydrogenase FadE2 (407 aa).

The protein belongs to the acyl-CoA dehydrogenase family. Requires FAD as cofactor.

The catalysed reaction is a 2,3-saturated acyl-CoA + A = a 2,3-dehydroacyl-CoA + AH2. The protein is Probable acyl-CoA dehydrogenase FadE2 of Mycobacterium tuberculosis (strain ATCC 25618 / H37Rv).